The sequence spans 444 residues: Tubulin beta chain (444 aa).

Residues glutamine 11, glutamate 69, serine 138, glycine 142, threonine 143, glycine 144, asparagine 204, and asparagine 226 each contribute to the GTP site. Glutamate 69 provides a ligand contact to Mg(2+).

Belongs to the tubulin family. Dimer of alpha and beta chains. A typical microtubule is a hollow water-filled tube with an outer diameter of 25 nm and an inner diameter of 15 nM. Alpha-beta heterodimers associate head-to-tail to form protofilaments running lengthwise along the microtubule wall with the beta-tubulin subunit facing the microtubule plus end conferring a structural polarity. Microtubules usually have 13 protofilaments but different protofilament numbers can be found in some organisms and specialized cells. Requires Mg(2+) as cofactor.

It localises to the cytoplasm. Its subcellular location is the cytoskeleton. Functionally, tubulin is the major constituent of microtubules, a cylinder consisting of laterally associated linear protofilaments composed of alpha- and beta-tubulin heterodimers. Microtubules grow by the addition of GTP-tubulin dimers to the microtubule end, where a stabilizing cap forms. Below the cap, tubulin dimers are in GDP-bound state, owing to GTPase activity of alpha-tubulin. This chain is Tubulin beta chain, found in Phytophthora cinnamomi (Cinnamon fungus).